The sequence spans 24 residues: Large ribosomal subunit protein uL30 (24 aa).

It belongs to the universal ribosomal protein uL30 family. As to quaternary structure, part of the 50S ribosomal subunit.

The chain is Large ribosomal subunit protein uL30 (rpmD) from Ectopseudomonas mendocina (Pseudomonas mendocina).